We begin with the raw amino-acid sequence, 379 residues long: UDP-4-amino-4-deoxy-L-arabinose--oxoglutarate aminotransferase (379 aa).

Lys182 carries the N6-(pyridoxal phosphate)lysine modification.

The protein belongs to the DegT/DnrJ/EryC1 family. ArnB subfamily. As to quaternary structure, homodimer. The cofactor is pyridoxal 5'-phosphate.

The enzyme catalyses UDP-4-amino-4-deoxy-beta-L-arabinose + 2-oxoglutarate = UDP-beta-L-threo-pentopyranos-4-ulose + L-glutamate. It functions in the pathway nucleotide-sugar biosynthesis; UDP-4-deoxy-4-formamido-beta-L-arabinose biosynthesis; UDP-4-deoxy-4-formamido-beta-L-arabinose from UDP-alpha-D-glucuronate: step 2/3. The protein operates within bacterial outer membrane biogenesis; lipopolysaccharide biosynthesis. In terms of biological role, catalyzes the conversion of UDP-4-keto-arabinose (UDP-Ara4O) to UDP-4-amino-4-deoxy-L-arabinose (UDP-L-Ara4N). The modified arabinose is attached to lipid A and is required for resistance to polymyxin and cationic antimicrobial peptides. The chain is UDP-4-amino-4-deoxy-L-arabinose--oxoglutarate aminotransferase from Escherichia coli O7:K1 (strain IAI39 / ExPEC).